The sequence spans 388 residues: DNA replication and repair protein RecF (388 aa).

30–37 (GANGNGKT) contributes to the ATP binding site.

Belongs to the RecF family.

Its subcellular location is the cytoplasm. Its function is as follows. The RecF protein is involved in DNA metabolism; it is required for DNA replication and normal SOS inducibility. RecF binds preferentially to single-stranded, linear DNA. It also seems to bind ATP. In Nocardia farcinica (strain IFM 10152), this protein is DNA replication and repair protein RecF.